Here is a 395-residue protein sequence, read N- to C-terminus: F-box only protein 7 (395 aa).

Residues 19-70 enclose the F-box domain; it reads NHDWSKLCPDILRKIIESLSSLDFYRAKIVCSDWYSVWKTCVKRPLRPWRII.

The sequence is that of F-box only protein 7 (FBX7) from Arabidopsis thaliana (Mouse-ear cress).